Here is a 428-residue protein sequence, read N- to C-terminus: Enolase 2 (428 aa).

Residue Gln-162 participates in (2R)-2-phosphoglycerate binding. Catalysis depends on Glu-204, which acts as the Proton donor. Residues Asp-241, Glu-285, and Asp-312 each contribute to the Mg(2+) site. 4 residues coordinate (2R)-2-phosphoglycerate: Lys-337, Arg-366, Ser-367, and Lys-388. Catalysis depends on Lys-337, which acts as the Proton acceptor.

This sequence belongs to the enolase family. Mg(2+) is required as a cofactor.

It is found in the cytoplasm. It localises to the secreted. The protein localises to the cell surface. The catalysed reaction is (2R)-2-phosphoglycerate = phosphoenolpyruvate + H2O. The protein operates within carbohydrate degradation; glycolysis; pyruvate from D-glyceraldehyde 3-phosphate: step 4/5. Functionally, catalyzes the reversible conversion of 2-phosphoglycerate (2-PG) into phosphoenolpyruvate (PEP). It is essential for the degradation of carbohydrates via glycolysis. This chain is Enolase 2, found in Lactobacillus johnsonii (strain CNCM I-12250 / La1 / NCC 533).